A 252-amino-acid polypeptide reads, in one-letter code: 5'-nucleotidase SurE (252 aa).

Asp-8, Asp-9, Ser-42, and Asn-94 together coordinate a divalent metal cation.

Belongs to the SurE nucleotidase family. Requires a divalent metal cation as cofactor.

The protein localises to the cytoplasm. It carries out the reaction a ribonucleoside 5'-phosphate + H2O = a ribonucleoside + phosphate. Its function is as follows. Nucleotidase that shows phosphatase activity on nucleoside 5'-monophosphates. In Ehrlichia ruminantium (strain Welgevonden), this protein is 5'-nucleotidase SurE.